A 777-amino-acid chain; its full sequence is Phosphoribosylformylglycinamidine synthase subunit PurL (777 aa).

H50 is a catalytic residue. 2 residues coordinate ATP: Y53 and K92. A Mg(2+)-binding site is contributed by E94. Substrate-binding positions include 95–98 and R117; that span reads SHNH. H96 (proton acceptor) is an active-site residue. Residue D118 coordinates Mg(2+). Q241 serves as a coordination point for substrate. A Mg(2+)-binding site is contributed by D269. Position 313–315 (313–315) interacts with substrate; sequence ESQ. ATP-binding residues include D516 and G553. N554 provides a ligand contact to Mg(2+). S556 lines the substrate pocket.

It belongs to the FGAMS family. As to quaternary structure, monomer. Part of the FGAM synthase complex composed of 1 PurL, 1 PurQ and 2 PurS subunits.

It localises to the cytoplasm. It carries out the reaction N(2)-formyl-N(1)-(5-phospho-beta-D-ribosyl)glycinamide + L-glutamine + ATP + H2O = 2-formamido-N(1)-(5-O-phospho-beta-D-ribosyl)acetamidine + L-glutamate + ADP + phosphate + H(+). The protein operates within purine metabolism; IMP biosynthesis via de novo pathway; 5-amino-1-(5-phospho-D-ribosyl)imidazole from N(2)-formyl-N(1)-(5-phospho-D-ribosyl)glycinamide: step 1/2. Its function is as follows. Part of the phosphoribosylformylglycinamidine synthase complex involved in the purines biosynthetic pathway. Catalyzes the ATP-dependent conversion of formylglycinamide ribonucleotide (FGAR) and glutamine to yield formylglycinamidine ribonucleotide (FGAM) and glutamate. The FGAM synthase complex is composed of three subunits. PurQ produces an ammonia molecule by converting glutamine to glutamate. PurL transfers the ammonia molecule to FGAR to form FGAM in an ATP-dependent manner. PurS interacts with PurQ and PurL and is thought to assist in the transfer of the ammonia molecule from PurQ to PurL. This Synechococcus elongatus (strain ATCC 33912 / PCC 7942 / FACHB-805) (Anacystis nidulans R2) protein is Phosphoribosylformylglycinamidine synthase subunit PurL.